Consider the following 264-residue polypeptide: H-2 class II histocompatibility antigen, E-D beta chain (264 aa).

An N-terminal signal peptide occupies residues 1-31; that stretch reads MVWLPRVPCVAAVILLLTVLSPPVALVRDTR. The beta-1 stretch occupies residues 32-121; sequence PRFLEYVTSE…ISDKFLVRRR (90 aa). Residues 32 to 225 lie on the Extracellular side of the membrane; sequence PRFLEYVTSE…KAQSTSAQNK (194 aa). Cystine bridges form between Cys-42-Cys-106 and Cys-144-Cys-200. Asn-46 carries an N-linked (GlcNAc...) asparagine glycan. The beta-2 stretch occupies residues 122–215; sequence VEPTVTVYPT…SLTDPVTVEW (94 aa). The region spanning 124 to 214 is the Ig-like C1-type domain; that stretch reads PTVTVYPTKT…PSLTDPVTVE (91 aa). Residues 216-225 form a connecting peptide region; that stretch reads KAQSTSAQNK. A helical transmembrane segment spans residues 226-248; the sequence is MLSGVGGFVLGLLFLGAGLFIYF. Over 249-264 the chain is Cytoplasmic; the sequence is RNQKGQSGLQPTGLLS.

The protein belongs to the MHC class II family.

The protein resides in the membrane. The polypeptide is H-2 class II histocompatibility antigen, E-D beta chain (Mus musculus (Mouse)).